Consider the following 679-residue polypeptide: Single-strand DNA endonuclease ASTE1 (679 aa).

The segment at 351-400 (TILPTQVENMQQPNAHRISQPIRQIIYGLLLNASPHLDKTSWNALPPQPL) is interaction with SHLD2. The tract at residues 625–645 (RSNSKKKRQKKQNTSCSKNRG) is disordered. A compositionally biased stretch (basic residues) spans 626 to 635 (SNSKKKRQKK).

It belongs to the asteroid family. As to quaternary structure, interacts with SHLD1, SHLD2, SHLD3, RIF1 and MAD2L2/REV7.

Functionally, structure-specific DNA endonuclease that specifically cleaves single-stranded DNA and 3' overhang DNA. Contributes to the control of DNA double-strand break repair choice by antagonizing BRCA1-dependent homologous recombination (HR) and promoting non-homologous end-joining (NHEJ). Recruited to the single-stranded DNA ends by SHLD2 and cleaves the 3' exposed DNA ends, therefore inhibiting DNA end resection (necessary for HR) and promoting DNA end protection (necessary for NHEJ). The protein is Single-strand DNA endonuclease ASTE1 (ASTE1) of Homo sapiens (Human).